The primary structure comprises 180 residues: Ribosome rescue factor SmrB (180 aa).

The Smr domain occupies 98–173 (LDLHGLTQLI…GDAALLLLVE (76 aa)).

Belongs to the SmrB family. Associates with collided ribosomes, but not with correctly translating polysomes.

Acts as a ribosome collision sensor. Detects stalled/collided disomes (pairs of ribosomes where the leading ribosome is stalled and a second ribosome has collided with it) and endonucleolytically cleaves mRNA at the 5' boundary of the stalled ribosome. Stalled/collided disomes form a new interface (primarily via the 30S subunits) that binds SmrB. Cleaved mRNA becomes available for tmRNA ligation, leading to ribosomal subunit dissociation and rescue of stalled ribosomes. This is Ribosome rescue factor SmrB from Proteus mirabilis (strain HI4320).